We begin with the raw amino-acid sequence, 202 residues long: ATP-dependent Clp protease proteolytic subunit (202 aa).

The active-site Nucleophile is the Ser101. His126 is an active-site residue.

The protein belongs to the peptidase S14 family. Component of the chloroplastic Clp protease core complex.

It is found in the plastid. It localises to the chloroplast stroma. The enzyme catalyses Hydrolysis of proteins to small peptides in the presence of ATP and magnesium. alpha-casein is the usual test substrate. In the absence of ATP, only oligopeptides shorter than five residues are hydrolyzed (such as succinyl-Leu-Tyr-|-NHMec, and Leu-Tyr-Leu-|-Tyr-Trp, in which cleavage of the -Tyr-|-Leu- and -Tyr-|-Trp bonds also occurs).. Functionally, cleaves peptides in various proteins in a process that requires ATP hydrolysis. Has a chymotrypsin-like activity. Plays a major role in the degradation of misfolded proteins. This is ATP-dependent Clp protease proteolytic subunit from Buxus microphylla (Littleleaf boxwood).